Reading from the N-terminus, the 237-residue chain is Putative biotin ligase (237 aa).

One can recognise a BPL/LPL catalytic domain in the interval 1–191 (MEIIHLSEID…KKYKKYSITI (191 aa)).

This sequence belongs to the biotin--protein ligase family.

The catalysed reaction is biotin + L-lysyl-[protein] + ATP = N(6)-biotinyl-L-lysyl-[protein] + AMP + diphosphate + H(+). The protein is Putative biotin ligase of Methanocaldococcus jannaschii (strain ATCC 43067 / DSM 2661 / JAL-1 / JCM 10045 / NBRC 100440) (Methanococcus jannaschii).